We begin with the raw amino-acid sequence, 467 residues long: UDP-N-acetylmuramate--L-alanine ligase (467 aa).

Residue 114-120 (GTHGKTT) participates in ATP binding.

This sequence belongs to the MurCDEF family.

It localises to the cytoplasm. The enzyme catalyses UDP-N-acetyl-alpha-D-muramate + L-alanine + ATP = UDP-N-acetyl-alpha-D-muramoyl-L-alanine + ADP + phosphate + H(+). The protein operates within cell wall biogenesis; peptidoglycan biosynthesis. Its function is as follows. Cell wall formation. The sequence is that of UDP-N-acetylmuramate--L-alanine ligase from Bradyrhizobium sp. (strain ORS 278).